The primary structure comprises 955 residues: Mediator of RNA polymerase II transcription subunit 16 (955 aa).

Residues 855–874 (ALPETNANANANQNGKSSTQ) form a disordered region. Residues 857 to 873 (PETNANANANQNGKSST) are compositionally biased toward polar residues.

The protein belongs to the Mediator complex subunit 16 family. In terms of assembly, component of the Mediator complex.

The protein localises to the nucleus. Component of the Mediator complex, a coactivator involved in the regulated transcription of nearly all RNA polymerase II-dependent genes. Mediator functions as a bridge to convey information from gene-specific regulatory proteins to the basal RNA polymerase II transcription machinery. Mediator is recruited to promoters by direct interactions with regulatory proteins and serves as a scaffold for the assembly of a functional preinitiation complex with RNA polymerase II and the general transcription factors. In Aspergillus fumigatus (strain ATCC MYA-4609 / CBS 101355 / FGSC A1100 / Af293) (Neosartorya fumigata), this protein is Mediator of RNA polymerase II transcription subunit 16 (sin4).